A 107-amino-acid polypeptide reads, in one-letter code: Replication initiation control protein YabA (107 aa).

Residues H81, C83, C97, and C100 each contribute to the Zn(2+) site.

This sequence belongs to the YabA family. As to quaternary structure, homotetramer. Interacts with both DnaA and DnaN, acting as a bridge between these two proteins. It depends on Zn(2+) as a cofactor.

The protein resides in the cytoplasm. It localises to the nucleoid. Functionally, involved in control of chromosome replication initiation. Inhibits the cooperative binding of DnaA to the oriC region, thus negatively regulating initiation of chromosome replication. Inhibits the ability of DnaA-ATP to form a helix on DNA; does not disassemble preformed DnaA-DNA helices. Decreases the residence time of DnaA on the chromosome at its binding sites (oriC, replication forks and promoter-binding sites). Tethers DnaA to the replication machinery via the DNA polymerase beta sliding clamp subunit (dnaN). Associates with oriC and other DnaA targets on the chromosome in a DnaA-dependent manner. This is Replication initiation control protein YabA from Streptococcus equi subsp. equi (strain 4047).